We begin with the raw amino-acid sequence, 507 residues long: Flagellar hook-associated protein 1 (507 aa).

This sequence belongs to the flagella basal body rod proteins family.

It localises to the secreted. The protein resides in the bacterial flagellum. The protein is Flagellar hook-associated protein 1 (flgK) of Bacillus subtilis (strain 168).